We begin with the raw amino-acid sequence, 210 residues long: Signal peptidase complex catalytic subunit SEC11 (210 aa).

At 1-21 the chain is on the cytoplasmic side; the sequence is MLAGLSPHLSNLRRSLTQVLN. A helical; Signal-anchor for type II membrane protein transmembrane segment spans residues 22-38; sequence FALVLSTAFMMWKGLSI. The Lumenal portion of the chain corresponds to 39–210; that stretch reads YTNSSSPIVV…MGAMVILQRE (172 aa). N-linked (GlcNAc...) asparagine glycosylation occurs at Asn41. Catalysis depends on charge relay system residues Ser53, His92, and Asp152. Positions 196–207 are C-terminal short (CTS) helix; it reads VLLGIMGAMVIL.

Belongs to the peptidase S26B family. As to quaternary structure, component of the signal peptidase complex (SPC) composed of a catalytic subunit SEC11 and three accessory subunits SPC1, SPC2 and SPC3. The complex induces a local thinning of the ER membrane which is used to measure the length of the signal peptide (SP) h-region of protein substrates. This ensures the selectivity of the complex towards h-regions shorter than 18-20 amino acids. SPC associates with the translocon complex.

The protein localises to the endoplasmic reticulum membrane. It carries out the reaction Cleavage of hydrophobic, N-terminal signal or leader sequences from secreted and periplasmic proteins.. Catalytic component of the signal peptidase complex (SPC) which catalyzes the cleavage of N-terminal signal sequences from nascent proteins as they are translocated into the lumen of the endoplasmic reticulum. Specifically cleaves N-terminal signal peptides that contain a hydrophobic alpha-helix (h-region) shorter than 18-20 amino acids. The polypeptide is Signal peptidase complex catalytic subunit SEC11 (SEC11) (Coccidioides posadasii (strain C735) (Valley fever fungus)).